Consider the following 880-residue polypeptide: Alanine--tRNA ligase (880 aa).

4 residues coordinate Zn(2+): His-558, His-562, Cys-663, and His-667.

Belongs to the class-II aminoacyl-tRNA synthetase family. The cofactor is Zn(2+).

The protein localises to the cytoplasm. It catalyses the reaction tRNA(Ala) + L-alanine + ATP = L-alanyl-tRNA(Ala) + AMP + diphosphate. Catalyzes the attachment of alanine to tRNA(Ala) in a two-step reaction: alanine is first activated by ATP to form Ala-AMP and then transferred to the acceptor end of tRNA(Ala). Also edits incorrectly charged Ser-tRNA(Ala) and Gly-tRNA(Ala) via its editing domain. In Mycoplasmopsis agalactiae (strain NCTC 10123 / CIP 59.7 / PG2) (Mycoplasma agalactiae), this protein is Alanine--tRNA ligase.